A 286-amino-acid chain; its full sequence is Bifunctional protein FolD (286 aa).

NADP(+) contacts are provided by residues 165-167 (GRS), Ser-190, and Val-231.

It belongs to the tetrahydrofolate dehydrogenase/cyclohydrolase family. In terms of assembly, homodimer.

The catalysed reaction is (6R)-5,10-methylene-5,6,7,8-tetrahydrofolate + NADP(+) = (6R)-5,10-methenyltetrahydrofolate + NADPH. It catalyses the reaction (6R)-5,10-methenyltetrahydrofolate + H2O = (6R)-10-formyltetrahydrofolate + H(+). Its pathway is one-carbon metabolism; tetrahydrofolate interconversion. Catalyzes the oxidation of 5,10-methylenetetrahydrofolate to 5,10-methenyltetrahydrofolate and then the hydrolysis of 5,10-methenyltetrahydrofolate to 10-formyltetrahydrofolate. This Bacillus cereus (strain ZK / E33L) protein is Bifunctional protein FolD.